Reading from the N-terminus, the 351-residue chain is S-adenosylmethionine:tRNA ribosyltransferase-isomerase (351 aa).

Belongs to the QueA family. In terms of assembly, monomer.

Its subcellular location is the cytoplasm. It catalyses the reaction 7-aminomethyl-7-carbaguanosine(34) in tRNA + S-adenosyl-L-methionine = epoxyqueuosine(34) in tRNA + adenine + L-methionine + 2 H(+). It participates in tRNA modification; tRNA-queuosine biosynthesis. Its function is as follows. Transfers and isomerizes the ribose moiety from AdoMet to the 7-aminomethyl group of 7-deazaguanine (preQ1-tRNA) to give epoxyqueuosine (oQ-tRNA). The polypeptide is S-adenosylmethionine:tRNA ribosyltransferase-isomerase (Acinetobacter baumannii (strain SDF)).